Consider the following 357-residue polypeptide: Norreticuline-7-O-methyltransferase (357 aa).

D225 contacts S-adenosyl-L-methionine. H263 functions as the Proton acceptor in the catalytic mechanism.

The protein belongs to the class I-like SAM-binding methyltransferase superfamily. Cation-independent O-methyltransferase family. As to expression, expressed instems, leaves, roots and seedlings.

Functionally, involved in the biosynthesis of benzylisoquinoline alkaloids. Catalyzes specifically the methylation of norreticuline at position seven to produce norlaudanine. No activity with norcoclaurine, reticuline, norlaudanosoline, norisoorientaline, scoulerine, salutaridinol, oripavine, salsolinol, codeine or morphine. Involved in papaverine biosynthesis. This Papaver somniferum (Opium poppy) protein is Norreticuline-7-O-methyltransferase.